Consider the following 523-residue polypeptide: Lysine-specific demethylase 4D (523 aa).

Residues 18 to 60 enclose the JmjN domain; it reads IMIFHPTKEEFNDFDKYIAYMESQGAHRAGLAKIIPPKEWKAR. PolyADP-ribosyl glutamic acid is present on residues glutamate 26 and glutamate 27. Tyrosine 136 contacts 2-oxoglutarate. Positions 146-312 constitute a JmjC domain; it reads DENTKQWNLG…YGKMASQCSC (167 aa). The Fe cation site is built by histidine 192 and glutamate 194. 2-oxoglutarate-binding residues include asparagine 202 and lysine 210. Residues cysteine 238 and histidine 244 each contribute to the Zn(2+) site. Lysine 245 contacts 2-oxoglutarate. Residue histidine 280 coordinates Fe cation. Positions 310 and 312 each coordinate Zn(2+). The disordered stretch occupies residues 407 to 523; sequence RRSAVSGTAT…ASGCSWAPVP (117 aa). Residues 428-440 are compositionally biased toward low complexity; it reads KPSSTPSSTPGPS. Basic residues predominate over residues 448 to 458; it reads NGRRGRGRPPQ.

This sequence belongs to the JHDM3 histone demethylase family. Fe(2+) serves as cofactor. Ubiquitinated via 'Lys-63'-linked ubiquitin chains. Deubiquitinated by USP14 with the help of TRIM14 leading to stabilization.

The protein localises to the nucleus. The catalysed reaction is N(6),N(6),N(6)-trimethyl-L-lysyl(9)-[histone H3] + 2 2-oxoglutarate + 2 O2 = N(6)-methyl-L-lysyl(9)-[histone H3] + 2 formaldehyde + 2 succinate + 2 CO2. Functionally, histone demethylase that specifically demethylates 'Lys-9' of histone H3, thereby playing a central role in histone code. Does not demethylate histone H3 'Lys-4', H3 'Lys-27', H3 'Lys-36' nor H4 'Lys-20'. Demethylates both di- and trimethylated H3 'Lys-9' residue, while it has no activity on monomethylated residues. Demethylation of Lys residue generates formaldehyde and succinate. This Homo sapiens (Human) protein is Lysine-specific demethylase 4D (KDM4D).